The sequence spans 408 residues: Probable cysteine desulfurase (408 aa).

The residue at position 225 (Lys225) is an N6-(pyridoxal phosphate)lysine.

Belongs to the class-V pyridoxal-phosphate-dependent aminotransferase family. Csd subfamily. The cofactor is pyridoxal 5'-phosphate.

The enzyme catalyses (sulfur carrier)-H + L-cysteine = (sulfur carrier)-SH + L-alanine. Functionally, catalyzes the removal of elemental sulfur and selenium atoms from L-cysteine, L-cystine, L-selenocysteine, and L-selenocystine to produce L-alanine. The polypeptide is Probable cysteine desulfurase (csd) (Mycoplasma genitalium (strain ATCC 33530 / DSM 19775 / NCTC 10195 / G37) (Mycoplasmoides genitalium)).